A 548-amino-acid chain; its full sequence is uncharacterized protein (548 aa).

One can recognise a DhaL domain in the interval 8–200; that stretch reads KLFADMIIQG…LLCVYEGFLK (193 aa).

This is an uncharacterized protein from Staphylococcus aureus (strain MRSA252).